The following is a 170-amino-acid chain: Crossover junction endodeoxyribonuclease RuvC (170 aa).

Residues aspartate 11, glutamate 71, and aspartate 143 contribute to the active site. Mg(2+)-binding residues include aspartate 11, glutamate 71, and aspartate 143.

It belongs to the RuvC family. As to quaternary structure, homodimer which binds Holliday junction (HJ) DNA. The HJ becomes 2-fold symmetrical on binding to RuvC with unstacked arms; it has a different conformation from HJ DNA in complex with RuvA. In the full resolvosome a probable DNA-RuvA(4)-RuvB(12)-RuvC(2) complex forms which resolves the HJ. Mg(2+) serves as cofactor.

The protein localises to the cytoplasm. The catalysed reaction is Endonucleolytic cleavage at a junction such as a reciprocal single-stranded crossover between two homologous DNA duplexes (Holliday junction).. Its function is as follows. The RuvA-RuvB-RuvC complex processes Holliday junction (HJ) DNA during genetic recombination and DNA repair. Endonuclease that resolves HJ intermediates. Cleaves cruciform DNA by making single-stranded nicks across the HJ at symmetrical positions within the homologous arms, yielding a 5'-phosphate and a 3'-hydroxyl group; requires a central core of homology in the junction. The consensus cleavage sequence is 5'-(A/T)TT(C/G)-3'. Cleavage occurs on the 3'-side of the TT dinucleotide at the point of strand exchange. HJ branch migration catalyzed by RuvA-RuvB allows RuvC to scan DNA until it finds its consensus sequence, where it cleaves and resolves the cruciform DNA. The chain is Crossover junction endodeoxyribonuclease RuvC from Agrobacterium fabrum (strain C58 / ATCC 33970) (Agrobacterium tumefaciens (strain C58)).